Consider the following 273-residue polypeptide: 5-deoxy-glucuronate isomerase (273 aa).

The protein belongs to the isomerase IolB family.

The catalysed reaction is 5-deoxy-D-glucuronate = 5-dehydro-2-deoxy-D-gluconate. It participates in polyol metabolism; myo-inositol degradation into acetyl-CoA; acetyl-CoA from myo-inositol: step 4/7. In terms of biological role, involved in the isomerization of 5-deoxy-glucuronate (5DG) to 5-dehydro-2-deoxy-D-gluconate (DKG or 2-deoxy-5-keto-D-gluconate). The sequence is that of 5-deoxy-glucuronate isomerase from Listeria monocytogenes serotype 4a (strain HCC23).